Consider the following 550-residue polypeptide: Putative golgin subfamily A member 6-like protein 19 (550 aa).

Positions Met-1–Pro-11 are enriched in pro residues. Positions Met-1–Gly-77 are disordered. Positions Asn-51–Gly-62 are enriched in polar residues. The stretch at Ser-157–Arg-405 forms a coiled coil. Positions Lys-467–Gly-480 are enriched in basic and acidic residues. The tract at residues Lys-467–Ala-529 is disordered. 2 stretches are compositionally biased toward low complexity: residues Ala-484–Ala-499 and Gly-517–Ala-529.

It belongs to the GOLGA6 family.

The protein is Putative golgin subfamily A member 6-like protein 19 (GOLGA6L19) of Homo sapiens (Human).